Consider the following 154-residue polypeptide: MVKAVAVLRGDSKISGTVTFEQADANAPTTVSWNITGHDANAERAFHVHQFGDNTNGCTSAGPHFNPFGKEHGAPEDENRHVGDLGNFKTDAEGNAVGSKQDKLIKLIGAESVLGRTLVIHAGTDDLGRSEHPESKKTGNAGARPACGVIGIAA.

His47, His49, and His64 together coordinate Cu cation. Cysteines 58 and 147 form a disulfide. His64, His72, His81, and Asp84 together coordinate Zn(2+). His121 is a Cu cation binding site. Positions 125–137 (DDLGRSEHPESKK) are enriched in basic and acidic residues. Positions 125–144 (DDLGRSEHPESKKTGNAGAR) are disordered. Arg144 contributes to the substrate binding site.

This sequence belongs to the Cu-Zn superoxide dismutase family. Homodimer. Requires Cu cation as cofactor. It depends on Zn(2+) as a cofactor.

The protein localises to the cytoplasm. The catalysed reaction is 2 superoxide + 2 H(+) = H2O2 + O2. Its function is as follows. Destroys radicals which are normally produced within the cells and which are toxic to biological systems. This chain is Superoxide dismutase [Cu-Zn] (sodC), found in Aspergillus oryzae (strain ATCC 42149 / RIB 40) (Yellow koji mold).